A 438-amino-acid polypeptide reads, in one-letter code: uncharacterized protein (438 aa).

Positions 1–32 are cleaved as a signal peptide; it reads MARPLLGKTSSVRRRLESLSACSIFFFLRKFC.

This is an uncharacterized protein from Frog virus 3 (isolate Goorha) (FV-3).